We begin with the raw amino-acid sequence, 1563 residues long: Pentafunctional AROM polypeptide (1563 aa).

Positions 1 to 382 (MAEPISNPTR…YEPKASVVED (382 aa)) are 3-dehydroquinate synthase. NAD(+) contacts are provided by residues 48–50 (DTN), 82–85 (EYSK), 113–115 (GGV), and Asp-118. 7-phospho-2-dehydro-3-deoxy-D-arabino-heptonate is bound at residue Arg-129. 138–139 (TT) serves as a coordination point for NAD(+). 7-phospho-2-dehydro-3-deoxy-D-arabino-heptonate contacts are provided by Asp-145 and Lys-151. Lys-160 contacts NAD(+). Asn-161 contributes to the 7-phospho-2-dehydro-3-deoxy-D-arabino-heptonate binding site. Residues 178 to 181 (FLNT) and Asn-189 each bind NAD(+). Residue Glu-193 participates in Zn(2+) binding. 7-phospho-2-dehydro-3-deoxy-D-arabino-heptonate-binding positions include 193 to 196 (EVIK) and Lys-248. The active-site Proton acceptor; for 3-dehydroquinate synthase activity is Glu-258. Residues 262–266 (RNLLN) and His-269 contribute to the 7-phospho-2-dehydro-3-deoxy-D-arabino-heptonate site. His-269 contributes to the Zn(2+) binding site. Catalysis depends on His-273, which acts as the Proton acceptor; for 3-dehydroquinate synthase activity. His-285 and Lys-354 together coordinate 7-phospho-2-dehydro-3-deoxy-D-arabino-heptonate. His-285 is a binding site for Zn(2+). An EPSP synthase region spans residues 395–834 (VFAGVPKDLN…WDTMSNYFKV (440 aa)). The active-site For EPSP synthase activity is the Cys-816. Residues 857-1051 (PKSIFIIGMR…KKKPHSFFVS (195 aa)) form a shikimate kinase region. ATP is bound at residue 864-871 (GMRGAGKS). Residues 1052-1265 (LTVPNVSKAL…AAPGQLSAAE (214 aa)) are 3-dehydroquinase. Catalysis depends on His-1168, which acts as the Proton acceptor; for 3-dehydroquinate dehydratase activity. Lys-1196 functions as the Schiff-base intermediate with substrate; for 3-dehydroquinate dehydratase activity in the catalytic mechanism. Residues 1278–1563 (PRSFHLFGNP…TDAQAAVMGN (286 aa)) are shikimate dehydrogenase.

This sequence in the N-terminal section; belongs to the sugar phosphate cyclases superfamily. Dehydroquinate synthase family. In the 2nd section; belongs to the EPSP synthase family. It in the 3rd section; belongs to the shikimate kinase family. The protein in the 4th section; belongs to the type-I 3-dehydroquinase family. This sequence in the C-terminal section; belongs to the shikimate dehydrogenase family. In terms of assembly, homodimer. Zn(2+) is required as a cofactor.

Its subcellular location is the cytoplasm. The catalysed reaction is 7-phospho-2-dehydro-3-deoxy-D-arabino-heptonate = 3-dehydroquinate + phosphate. It carries out the reaction 3-dehydroquinate = 3-dehydroshikimate + H2O. The enzyme catalyses shikimate + NADP(+) = 3-dehydroshikimate + NADPH + H(+). It catalyses the reaction shikimate + ATP = 3-phosphoshikimate + ADP + H(+). The catalysed reaction is 3-phosphoshikimate + phosphoenolpyruvate = 5-O-(1-carboxyvinyl)-3-phosphoshikimate + phosphate. Its pathway is metabolic intermediate biosynthesis; chorismate biosynthesis; chorismate from D-erythrose 4-phosphate and phosphoenolpyruvate: step 2/7. It participates in metabolic intermediate biosynthesis; chorismate biosynthesis; chorismate from D-erythrose 4-phosphate and phosphoenolpyruvate: step 3/7. The protein operates within metabolic intermediate biosynthesis; chorismate biosynthesis; chorismate from D-erythrose 4-phosphate and phosphoenolpyruvate: step 4/7. It functions in the pathway metabolic intermediate biosynthesis; chorismate biosynthesis; chorismate from D-erythrose 4-phosphate and phosphoenolpyruvate: step 5/7. Its pathway is metabolic intermediate biosynthesis; chorismate biosynthesis; chorismate from D-erythrose 4-phosphate and phosphoenolpyruvate: step 6/7. Functionally, the AROM polypeptide catalyzes 5 consecutive enzymatic reactions in prechorismate polyaromatic amino acid biosynthesis. The polypeptide is Pentafunctional AROM polypeptide (Neurospora crassa (strain ATCC 24698 / 74-OR23-1A / CBS 708.71 / DSM 1257 / FGSC 987)).